The following is a 1286-amino-acid chain: ABC transporter B family member 1 (1286 aa).

A run of 2 helical transmembrane segments spans residues 42 to 62 (VLMG…PLFL) and 93 to 113 (FLVV…CWMW). Positions 44–333 (MGIGSVGAFV…SAPSMAAFAK (290 aa)) constitute an ABC transmembrane type-1 1 domain. Residue aspartate 139 participates in ATP binding. The next 2 helical transmembrane spans lie at 166–186 (LGNF…GFTA) and 187–207 (VWQL…IGGI). N-linked (GlcNAc...) asparagine glycosylation occurs at asparagine 217. Helical transmembrane passes span 277 to 297 (ATYF…GYLV) and 301 to 321 (LTNG…GLAL). Tyrosine 286 provides a ligand contact to brassinolide. The ABC transporter 1 domain occupies 368–604 (VELKNVDFSY…GENGVYAKLI (237 aa)). ATP-binding residues include tyrosine 377, serine 379, arginine 380, glycine 408, lysine 409, serine 410, and threonine 411. Residues 614 to 647 (AMSNARKSSARPSSARNSVSSPIMTRNSSYGRSP) are disordered. Low complexity predominate over residues 616-635 (SNARKSSARPSSARNSVSSP). An N-linked (GlcNAc...) asparagine glycan is attached at asparagine 640. The region spanning 700–988 (ALLGSVGSVI…TLTLAPDFIK (289 aa)) is the ABC transmembrane type-1 2 domain. The next 2 helical transmembrane spans lie at 705 to 725 (VGSV…SAVL) and 745 to 765 (YLLI…HSFW). Asparagine 771 carries N-linked (GlcNAc...) asparagine glycosylation. Aspartate 793 contributes to the ATP binding site. The N-linked (GlcNAc...) asparagine glycan is linked to asparagine 797. A run of 4 helical transmembrane segments spans residues 821–843 (ISVI…VLQW), 845–867 (LALV…KMFM), 932–952 (VAQF…SWLV), and 967–987 (MVLM…PDFI). Tyrosine 941 and glutamate 978 together coordinate brassinolide. An ABC transporter 2 domain is found at 1024–1260 (VELKHIDFSY…HPDGIYARMI (237 aa)). ATP is bound by residues tyrosine 1033, arginine 1036, glycine 1064, lysine 1065, and serine 1066. Positions 1049–1286 (ARAGKTLALV…SSSRVKEDDA (238 aa)) are interaction with FKBP42/TWD1.

The protein belongs to the ABC transporter superfamily. ABCB family. Multidrug resistance exporter (TC 3.A.1.201) subfamily. In terms of assembly, interacts with 1-naphthylphthalamic acid (NPA) and FKBP42/TWD1. As to expression, ubiquitous, with high levels in peduncles. Mostly localized in young developing tissues, including meristems, as well as root and shoot apices.

The protein localises to the cell membrane. It carries out the reaction (indol-3-yl)acetate(in) + ATP + H2O = (indol-3-yl)acetate(out) + ADP + phosphate + H(+). The enzyme catalyses brassinolide(in) + ATP + H2O = brassinolide(out) + ADP + phosphate + H(+). The catalysed reaction is 24-epi-brassinolide(in) + ATP + H2O = 24-epi-brassinolide(out) + ADP + phosphate + H(+). It catalyses the reaction 24-epi-castasterone(in) + ATP + H2O = 24-epi-castasterone(out) + ADP + phosphate + H(+). It carries out the reaction castasterone(in) + ATP + H2O = castasterone(out) + ADP + phosphate + H(+). With respect to regulation, transport capacity is stimulated by the chaperone protein FKBP42/TWD1. Transport activity inhibited by 1-N-naphthylphthalamic acid (NPA), cyclopropyl propane dione (CPD), cyclosporin A, verapamil and quercetin. ATPase activity is specifically activated by bioactive brassinosteroids in a dose-dependent manner, including brassinolide (BL), 24-epiBL, 24-epicastasterone (24-epiCS) and castasterone-alkyne; BL binding leads to structural changes. Inhibited by vanadate. Its function is as follows. Brassinosteroid exporter that, in conjunction with ABCB19, supports the accumulation of exogenous brassinosteroids (BR) in the apoplast, thus promoting BR signaling initiation involving the specific receptor BRI1 and required for plant growth and stress responses. Auxin efflux transporter that acts as a negative regulator of light signaling to promote hypocotyl elongation. May contribute to the regulation of leaf position and morphology during PHOT1-mediated blue light responses involving auxin distribution, especially in low light fluence. Together with ABCB19 and in a FKBP42/TWD1-dependent manner, supports seed development by promoting stamen elongation and, to a lesser extent, anther dehiscence and pollen maturation, probably as auxin transporters. Mediates the accumulation of chlorophyll and anthocyanin, as well as the expression of genes in response to light. Participates directly in auxin efflux and thus regulates the polar (presumably basipetal) auxin transport (from root tips to root elongating zone). Also transports some auxin metabolites such as oxindoleacetic acid and indoleacetaldehyde. Involved in diverse auxin-mediated responses including gravitropism, phototropism and lateral root formation. Confers resistance to herbicides such as dicamba, pendimethalin, oryzalin, and monosodium acid methanearsonate (MSMA), but not to herbicides such as glyphosate, atrazine, bentazon and fluazifop-p-butyl. Also mediates resistance to xenobiotics such as cycloheximide and the cytokinin N6-(2-isopentenyl)adenine (2IP). This Arabidopsis thaliana (Mouse-ear cress) protein is ABC transporter B family member 1.